We begin with the raw amino-acid sequence, 518 residues long: Pumilio homolog 14 (518 aa).

2 disordered regions span residues 26–46 and 77–114; these read TMAS…QPEN and VGQN…PPMG. Residues 29-44 are compositionally biased toward low complexity; sequence SSSSQPQPISSPFHQP. Positions 178 to 518 constitute a PUM-HD domain; it reads YTNRFGYEGY…GNKVLEKLNI (341 aa). Residues 206-235 form a Pumilio 1; degenerate repeat; it reads SAFAKDKEMSERLGMSIFQGTKETVDAIYN. 7 Pumilio repeats span residues 236–271, 275–313, 314–348, 349–387, 388–423, 424–459, and 460–494; these read GLIG…QLVD, QQMF…RIVD, VVRT…LLLE, LIVQ…RLIM, EAIA…ALVR, QLIG…IVID, and LLRE…MLRY.

It localises to the cytoplasm. Its subcellular location is the nucleus. Functionally, sequence-specific RNA-binding protein that regulates translation and mRNA stability by binding the 3'-UTR of target mRNAs. This chain is Pumilio homolog 14 (APUM14), found in Arabidopsis thaliana (Mouse-ear cress).